The chain runs to 447 residues: ATP-dependent protease ATPase subunit HslU (447 aa).

ATP is bound by residues isoleucine 18, 60–65, aspartate 259, glutamate 325, and arginine 397; that span reads GVGKTE.

Belongs to the ClpX chaperone family. HslU subfamily. In terms of assembly, a double ring-shaped homohexamer of HslV is capped on each side by a ring-shaped HslU homohexamer. The assembly of the HslU/HslV complex is dependent on binding of ATP.

It localises to the cytoplasm. Its function is as follows. ATPase subunit of a proteasome-like degradation complex; this subunit has chaperone activity. The binding of ATP and its subsequent hydrolysis by HslU are essential for unfolding of protein substrates subsequently hydrolyzed by HslV. HslU recognizes the N-terminal part of its protein substrates and unfolds these before they are guided to HslV for hydrolysis. This is ATP-dependent protease ATPase subunit HslU from Burkholderia cenocepacia (strain HI2424).